The sequence spans 263 residues: MTRPVRLQDLRDYKKNNRPWAMLTTYDYSTTRAFVDAGIEVFLVGDSAANTMLGYSGTNQVSFEEMVMLTAAVVRGAGPAMVVADLPFGTYEASDEQAVRSATEMVRRTGAHVVKLEGGVRMASRIRAITDAGVPVCAHLGFTPQSMNQLSGFKVQRGAEKLTADVDAVVEAGAEMVVFEMVPADLAAELTARCPIPVIGIGAGNATDAQVLVWHDIANLPKGDHRARFVKTYAEVGSQLTCAARFYRKDVEARRFPAEEHTF.

The Mg(2+) site is built by Asp46 and Asp85. 3-methyl-2-oxobutanoate contacts are provided by residues 46 to 47 (DS), Asp85, and Lys115. Residue Glu117 coordinates Mg(2+). Glu180 functions as the Proton acceptor in the catalytic mechanism.

It belongs to the PanB family. In terms of assembly, homodecamer; pentamer of dimers. Mg(2+) is required as a cofactor.

The protein localises to the cytoplasm. It carries out the reaction 3-methyl-2-oxobutanoate + (6R)-5,10-methylene-5,6,7,8-tetrahydrofolate + H2O = 2-dehydropantoate + (6S)-5,6,7,8-tetrahydrofolate. It participates in cofactor biosynthesis; (R)-pantothenate biosynthesis; (R)-pantoate from 3-methyl-2-oxobutanoate: step 1/2. Functionally, catalyzes the reversible reaction in which hydroxymethyl group from 5,10-methylenetetrahydrofolate is transferred onto alpha-ketoisovalerate to form ketopantoate. The polypeptide is 3-methyl-2-oxobutanoate hydroxymethyltransferase (Corynebacterium diphtheriae (strain ATCC 700971 / NCTC 13129 / Biotype gravis)).